A 199-amino-acid polypeptide reads, in one-letter code: Recombination protein RecR (199 aa).

The C4-type zinc finger occupies 60 to 75 (CARCHTFTEGEVCSTC). One can recognise a Toprim domain in the interval 83-178 (SRLAVVETPA…HVTRLARGVP (96 aa)).

The protein belongs to the RecR family.

Its function is as follows. May play a role in DNA repair. It seems to be involved in an RecBC-independent recombinational process of DNA repair. It may act with RecF and RecO. The chain is Recombination protein RecR from Paracidovorax citrulli (strain AAC00-1) (Acidovorax citrulli).